A 208-amino-acid polypeptide reads, in one-letter code: Octanoyltransferase (208 aa).

Positions 30 to 208 (GTASEAVFIL…ILKQEFYKIF (179 aa)) constitute a BPL/LPL catalytic domain. Substrate is bound by residues 69–76 (RGGKFTYH), 142–144 (SIG), and 155–157 (GVA). Cys-173 serves as the catalytic Acyl-thioester intermediate.

It belongs to the LipB family.

It is found in the cytoplasm. It carries out the reaction octanoyl-[ACP] + L-lysyl-[protein] = N(6)-octanoyl-L-lysyl-[protein] + holo-[ACP] + H(+). Its pathway is protein modification; protein lipoylation via endogenous pathway; protein N(6)-(lipoyl)lysine from octanoyl-[acyl-carrier-protein]: step 1/2. Functionally, catalyzes the transfer of endogenously produced octanoic acid from octanoyl-acyl-carrier-protein onto the lipoyl domains of lipoate-dependent enzymes. Lipoyl-ACP can also act as a substrate although octanoyl-ACP is likely to be the physiological substrate. In Orientia tsutsugamushi (strain Ikeda) (Rickettsia tsutsugamushi), this protein is Octanoyltransferase.